We begin with the raw amino-acid sequence, 348 residues long: Protein RecA (348 aa).

Residue glycine 69–threonine 76 coordinates ATP.

The protein belongs to the RecA family.

The protein localises to the cytoplasm. Can catalyze the hydrolysis of ATP in the presence of single-stranded DNA, the ATP-dependent uptake of single-stranded DNA by duplex DNA, and the ATP-dependent hybridization of homologous single-stranded DNAs. It interacts with LexA causing its activation and leading to its autocatalytic cleavage. The sequence is that of Protein RecA from Gluconacetobacter polyoxogenes (Acetobacter polyoxogenes).